Reading from the N-terminus, the 467-residue chain is Ankyrin repeat and SOCS box protein 10 (467 aa).

ANK repeat units lie at residues E115–S144, G147–T176, D180–G209, E214–V243, E247–A289, D293–A322, and G326–V361. Residues Y412–Y467 enclose the SOCS box domain.

Belongs to the ankyrin SOCS box (ASB) family.

The protein localises to the nucleus. It localises to the cytoplasm. It participates in protein modification; protein ubiquitination. In terms of biological role, may be a substrate-recognition component of a SCF-like ECS (Elongin-Cullin-SOCS-box protein) E3 ubiquitin-protein ligase complex which mediates the ubiquitination and subsequent proteasomal degradation of target proteins. The protein is Ankyrin repeat and SOCS box protein 10 (Asb10) of Mus musculus (Mouse).